The following is a 151-amino-acid chain: Viral interleukin-17 (151 aa).

Positions 1-22 are cleaved as a signal peptide; it reads MTFRKTSLVLLLLLSIDCIVKS. N-linked (GlcNAc...) asparagine; by host glycosylation is found at Asn36, Asn53, and Asn64. Cystine bridges form between Cys90–Cys140 and Cys95–Cys142.

The protein belongs to the IL-17 family.

It localises to the secreted. The polypeptide is Viral interleukin-17 (13) (Saimiri sciureus (Common squirrel monkey)).